The following is a 97-amino-acid chain: YcgL domain-containing protein CPS_3517 (97 aa).

The YcgL domain occupies 1 to 85 (MLCAIYKSAR…PQEDLLKEHK (85 aa)).

This chain is YcgL domain-containing protein CPS_3517, found in Colwellia psychrerythraea (strain 34H / ATCC BAA-681) (Vibrio psychroerythus).